The following is a 238-amino-acid chain: Probable RNA/DNA demethylase ALKBH6 (238 aa).

Residues 96–227 (PANHVLVNQY…RVSLTIRRVP (132 aa)) enclose the Fe2OG dioxygenase domain. Residues asparagine 103 and tyrosine 105 each coordinate 2-oxoglutarate. The Fe cation site is built by histidine 114, aspartate 116, and histidine 182. 2 residues coordinate 2-oxoglutarate: arginine 218 and serine 220.

Belongs to the alkB family. In terms of assembly, interacts with VCPKMT. It depends on Fe(2+) as a cofactor.

It localises to the cytoplasm. The protein resides in the nucleus. Functionally, probable Fe(2+)/2-oxoglutarate-dependent dioxygenase involved in oxidative demethylation of nucleic acids. Binds nucleic acids with a preference for ssDNA or ssRNA to other types of DNAs. May play a role in nucleic acid damage repair. The polypeptide is Probable RNA/DNA demethylase ALKBH6 (Alkbh6) (Mus musculus (Mouse)).